Consider the following 119-residue polypeptide: Phosphoribosyl-AMP cyclohydrolase (119 aa).

Asp-77 provides a ligand contact to Mg(2+). Cys-78 serves as a coordination point for Zn(2+). The Mg(2+) site is built by Asp-79 and Asp-81. Residues Cys-94 and Cys-101 each contribute to the Zn(2+) site.

The protein belongs to the PRA-CH family. As to quaternary structure, homodimer. Mg(2+) serves as cofactor. It depends on Zn(2+) as a cofactor.

It localises to the cytoplasm. It carries out the reaction 1-(5-phospho-beta-D-ribosyl)-5'-AMP + H2O = 1-(5-phospho-beta-D-ribosyl)-5-[(5-phospho-beta-D-ribosylamino)methylideneamino]imidazole-4-carboxamide. The protein operates within amino-acid biosynthesis; L-histidine biosynthesis; L-histidine from 5-phospho-alpha-D-ribose 1-diphosphate: step 3/9. Functionally, catalyzes the hydrolysis of the adenine ring of phosphoribosyl-AMP. This is Phosphoribosyl-AMP cyclohydrolase from Cereibacter sphaeroides (strain ATCC 17023 / DSM 158 / JCM 6121 / CCUG 31486 / LMG 2827 / NBRC 12203 / NCIMB 8253 / ATH 2.4.1.) (Rhodobacter sphaeroides).